The following is a 465-amino-acid chain: GDNF family receptor alpha-2 (465 aa).

An N-terminal signal peptide occupies residues 1-21 (MILANAFCIVLFVDETLRSLA). Disulfide bonds link cysteine 40–cysteine 93, cysteine 47–cysteine 53, cysteine 63–cysteine 78, cysteine 95–cysteine 105, cysteine 159–cysteine 220, cysteine 166–cysteine 172, cysteine 183–cysteine 198, cysteine 193–cysteine 239, cysteine 222–cysteine 227, cysteine 249–cysteine 321, cysteine 256–cysteine 262, cysteine 273–cysteine 291, cysteine 283–cysteine 345, and cysteine 323–cysteine 333. 3 N-linked (GlcNAc...) asparagine glycosylation sites follow: asparagine 355, asparagine 387, and asparagine 412. Serine 445 carries GPI-anchor amidated serine lipidation. The propeptide at 446 to 465 (RHRAARILPAVPIVLLKLLL) is removed in mature form.

Belongs to the GDNFR family. In terms of assembly, interacts with NRTN ligand and RET: forms a 2:2:2 ternary complex composed of NRTN ligand, GFRA2 and RET receptor.

Its subcellular location is the cell membrane. Its function is as follows. Receptor for neurturin (NRTN), a growth factor that supports the survival of sympathetic neurons. NRTN-binding leads to autophosphorylation and activation of the RET receptor. This is GDNF family receptor alpha-2 (GFRA2) from Gallus gallus (Chicken).